A 453-amino-acid polypeptide reads, in one-letter code: Flavonol-3-O-rhamnosyltransferase (453 aa).

His-24 functions as the Proton acceptor in the catalytic mechanism. His-24 serves as a coordination point for an anthocyanidin. Catalysis depends on Asp-119, which acts as the Charge relay. His-150 is a binding site for an anthocyanidin. Positions 280, 333, 350, 354, 355, and 358 each coordinate UDP-beta-L-rhamnose. Residue Ala-373 participates in an anthocyanidin binding.

Belongs to the UDP-glycosyltransferase family. Expressed in leaves, flowers, siliques, and stems. Expressed in the shoot apex.

It catalyses the reaction kaempferol + UDP-beta-L-rhamnose = kaempferol 3-O-alpha-L-rhamnoside + UDP + H(+). The enzyme catalyses UDP-beta-L-rhamnose + quercetin = quercitrin + UDP + H(+). Its pathway is flavonoid metabolism. Its function is as follows. Flavonol 3-O-rhamnosyltransferase that catalyzes the transfer of rhamnose from UDP-rhamnose to the 3-OH position of kaempferol and quercetin. Possesses low quercetin 3-O-glucosyltransferase activity in vitro. The chain is Flavonol-3-O-rhamnosyltransferase from Arabidopsis thaliana (Mouse-ear cress).